The following is a 372-amino-acid chain: MALRFEILHQSKKSRARVGRIETAHGYIDTPAFVPVATNGALKGVLDHSNIPLMFCNTYHLIVHPGAEAIAAMGGLHQFIGRNAPIITDSGGFQIFSLAYGSVAEEIKSCGKKKGGNTIIKVNDDGVHFKSYRDGRKLFLSPEISVQAQKDLGADIILPLDELLPFHADPTYFHQSSQRTYVWEKRSLDYHLKNPGIQSMYGVIHGGTFPDQRKLGCKFVEDLPFDGSAIGGSLGKNLQDIVEVVGVTAANLSAERPRHLLGIGDLPSIWATVGFGIDSFDSSYPTKAARHGMILTLQGPLKINNQRYSSDLNPIEPGCSCLACSQGITRAYLRHLFKVHEPNAGIWASIHNMHHMQKVMREIREGILNDRI.

The active-site Proton acceptor is Asp-89. Substrate is bound by residues 89 to 93 (DSGGF), Asp-161, and Gly-232. Residues 262 to 268 (GIGDLPS) form an RNA binding region. Asp-281 (nucleophile) is an active-site residue. The tract at residues 286–290 (TKAAR) is RNA binding; important for wobble base 34 recognition. Residues Cys-319, Cys-321, Cys-324, and His-351 each coordinate Zn(2+).

The protein belongs to the queuine tRNA-ribosyltransferase family. As to quaternary structure, homodimer. Within each dimer, one monomer is responsible for RNA recognition and catalysis, while the other monomer binds to the replacement base PreQ1. The cofactor is Zn(2+).

It carries out the reaction 7-aminomethyl-7-carbaguanine + guanosine(34) in tRNA = 7-aminomethyl-7-carbaguanosine(34) in tRNA + guanine. It participates in tRNA modification; tRNA-queuosine biosynthesis. Functionally, catalyzes the base-exchange of a guanine (G) residue with the queuine precursor 7-aminomethyl-7-deazaguanine (PreQ1) at position 34 (anticodon wobble position) in tRNAs with GU(N) anticodons (tRNA-Asp, -Asn, -His and -Tyr). Catalysis occurs through a double-displacement mechanism. The nucleophile active site attacks the C1' of nucleotide 34 to detach the guanine base from the RNA, forming a covalent enzyme-RNA intermediate. The proton acceptor active site deprotonates the incoming PreQ1, allowing a nucleophilic attack on the C1' of the ribose to form the product. After dissociation, two additional enzymatic reactions on the tRNA convert PreQ1 to queuine (Q), resulting in the hypermodified nucleoside queuosine (7-(((4,5-cis-dihydroxy-2-cyclopenten-1-yl)amino)methyl)-7-deazaguanosine). This is Queuine tRNA-ribosyltransferase from Chlamydia trachomatis serovar A (strain ATCC VR-571B / DSM 19440 / HAR-13).